We begin with the raw amino-acid sequence, 226 residues long: UPF0173 metal-dependent hydrolase Tpet_1587 (226 aa).

The protein belongs to the UPF0173 family.

This Thermotoga petrophila (strain ATCC BAA-488 / DSM 13995 / JCM 10881 / RKU-1) protein is UPF0173 metal-dependent hydrolase Tpet_1587.